The following is a 507-amino-acid chain: Glycerol kinase 1 (507 aa).

Thr12 is a binding site for ADP. ATP is bound by residues Thr12, Thr13, and Ser14. Position 12 (Thr12) interacts with sn-glycerol 3-phosphate. Arg16 contributes to the ADP binding site. Sn-glycerol 3-phosphate-binding residues include Arg82, Glu83, Tyr134, and Asp249. Glycerol-binding residues include Arg82, Glu83, Tyr134, Asp249, and Gln250. Positions 271 and 315 each coordinate ADP. ATP is bound by residues Thr271, Gly315, Gln319, and Gly416. ADP-binding residues include Gly416 and Asn420.

This sequence belongs to the FGGY kinase family.

It catalyses the reaction glycerol + ATP = sn-glycerol 3-phosphate + ADP + H(+). Its pathway is polyol metabolism; glycerol degradation via glycerol kinase pathway; sn-glycerol 3-phosphate from glycerol: step 1/1. Inhibited by fructose 1,6-bisphosphate (FBP). Its function is as follows. Key enzyme in the regulation of glycerol uptake and metabolism. Catalyzes the phosphorylation of glycerol to yield sn-glycerol 3-phosphate. This is Glycerol kinase 1 from Streptomyces coelicolor (strain ATCC BAA-471 / A3(2) / M145).